The sequence spans 280 residues: Bifunctional protein FolD (280 aa).

Residues 166 to 168 and serine 191 contribute to the NADP(+) site; that span reads GRS.

It belongs to the tetrahydrofolate dehydrogenase/cyclohydrolase family. Homodimer.

The catalysed reaction is (6R)-5,10-methylene-5,6,7,8-tetrahydrofolate + NADP(+) = (6R)-5,10-methenyltetrahydrofolate + NADPH. It carries out the reaction (6R)-5,10-methenyltetrahydrofolate + H2O = (6R)-10-formyltetrahydrofolate + H(+). It participates in one-carbon metabolism; tetrahydrofolate interconversion. In terms of biological role, catalyzes the oxidation of 5,10-methylenetetrahydrofolate to 5,10-methenyltetrahydrofolate and then the hydrolysis of 5,10-methenyltetrahydrofolate to 10-formyltetrahydrofolate. The chain is Bifunctional protein FolD from Saccharophagus degradans (strain 2-40 / ATCC 43961 / DSM 17024).